We begin with the raw amino-acid sequence, 358 residues long: tRNA N6-adenosine threonylcarbamoyltransferase (358 aa).

Fe cation contacts are provided by His111 and His115. Substrate-binding positions include 146 to 150 (LVSGG), Asp179, Gly192, and Asn294. Residue Asp322 participates in Fe cation binding.

Belongs to the KAE1 / TsaD family. The cofactor is Fe(2+).

Its subcellular location is the cytoplasm. It carries out the reaction L-threonylcarbamoyladenylate + adenosine(37) in tRNA = N(6)-L-threonylcarbamoyladenosine(37) in tRNA + AMP + H(+). In terms of biological role, required for the formation of a threonylcarbamoyl group on adenosine at position 37 (t(6)A37) in tRNAs that read codons beginning with adenine. Is involved in the transfer of the threonylcarbamoyl moiety of threonylcarbamoyl-AMP (TC-AMP) to the N6 group of A37, together with TsaE and TsaB. TsaD likely plays a direct catalytic role in this reaction. The chain is tRNA N6-adenosine threonylcarbamoyltransferase from Helicobacter hepaticus (strain ATCC 51449 / 3B1).